Reading from the N-terminus, the 298-residue chain is Acetylglutamate kinase (298 aa).

Substrate contacts are provided by residues 69 to 70 (GG), arginine 91, and asparagine 196.

This sequence belongs to the acetylglutamate kinase family. ArgB subfamily.

It localises to the cytoplasm. The enzyme catalyses N-acetyl-L-glutamate + ATP = N-acetyl-L-glutamyl 5-phosphate + ADP. The protein operates within amino-acid biosynthesis; L-arginine biosynthesis; N(2)-acetyl-L-ornithine from L-glutamate: step 2/4. In terms of biological role, catalyzes the ATP-dependent phosphorylation of N-acetyl-L-glutamate. This chain is Acetylglutamate kinase, found in Rhodopseudomonas palustris (strain BisB5).